The sequence spans 596 residues: Elongation factor 4 (596 aa).

The region spanning 2–184 (KHIRNFSIIA…VIVAQIPPPE (183 aa)) is the tr-type G domain. GTP contacts are provided by residues 14 to 19 (DHGKST) and 131 to 134 (NKID).

It belongs to the TRAFAC class translation factor GTPase superfamily. Classic translation factor GTPase family. LepA subfamily.

It is found in the cell inner membrane. It carries out the reaction GTP + H2O = GDP + phosphate + H(+). In terms of biological role, required for accurate and efficient protein synthesis under certain stress conditions. May act as a fidelity factor of the translation reaction, by catalyzing a one-codon backward translocation of tRNAs on improperly translocated ribosomes. Back-translocation proceeds from a post-translocation (POST) complex to a pre-translocation (PRE) complex, thus giving elongation factor G a second chance to translocate the tRNAs correctly. Binds to ribosomes in a GTP-dependent manner. This chain is Elongation factor 4, found in Shewanella halifaxensis (strain HAW-EB4).